Here is a 232-residue protein sequence, read N- to C-terminus: MTVQQRRRPPIASRETLQALLSEGAQALGVALSDAQRSALLDYVALLAKWNAVYNLTAIRDPRQMLIQHILDSLSIVPHLGAHGAAAAALDVGSGGGLPGVVLAIALPGWRVTLNDIVHKKSAFQNQAKAELKLGNLSVVTGRVETLRPGADVPAKFDVIVSRAFADLADFVTLARHLVAPGGSIWAMKGVRPDEEIGRLPDGARVKQMIRLTVPSLDAERHLIEVELDEAI.

S-adenosyl-L-methionine is bound by residues Gly-93, Leu-98, 144 to 145 (VE), and Arg-163.

This sequence belongs to the methyltransferase superfamily. RNA methyltransferase RsmG family.

The protein localises to the cytoplasm. The enzyme catalyses guanosine(527) in 16S rRNA + S-adenosyl-L-methionine = N(7)-methylguanosine(527) in 16S rRNA + S-adenosyl-L-homocysteine. Specifically methylates the N7 position of guanine in position 527 of 16S rRNA. This Burkholderia pseudomallei (strain 1106a) protein is Ribosomal RNA small subunit methyltransferase G.